The sequence spans 552 residues: Lysine--tRNA ligase (552 aa).

The 'HIGH' region signature appears at P71–T79. The short motif at K319–S323 is the 'KMSKS' region element. K322 is a binding site for ATP.

The protein belongs to the class-I aminoacyl-tRNA synthetase family.

Its subcellular location is the cytoplasm. The catalysed reaction is tRNA(Lys) + L-lysine + ATP = L-lysyl-tRNA(Lys) + AMP + diphosphate. This Caulobacter sp. (strain K31) protein is Lysine--tRNA ligase.